Consider the following 118-residue polypeptide: Large ribosomal subunit protein mL53 (118 aa).

Residues Ala99–Arg118 are disordered.

This sequence belongs to the mitochondrion-specific ribosomal protein mL53 family. In terms of assembly, component of the mitochondrial ribosome large subunit (39S) which comprises a 16S rRNA and about 50 distinct proteins.

The protein resides in the mitochondrion. The polypeptide is Large ribosomal subunit protein mL53 (Mrpl53) (Mus musculus (Mouse)).